A 396-amino-acid chain; its full sequence is Phosphoglycerate kinase (396 aa).

Substrate-binding positions include 22-24 (DLN), arginine 37, 60-63 (HFGR), arginine 118, and arginine 151. Residues lysine 201, glutamate 323, and 353–356 (GGDT) contribute to the ATP site.

It belongs to the phosphoglycerate kinase family. Monomer.

It localises to the cytoplasm. It carries out the reaction (2R)-3-phosphoglycerate + ATP = (2R)-3-phospho-glyceroyl phosphate + ADP. It participates in carbohydrate degradation; glycolysis; pyruvate from D-glyceraldehyde 3-phosphate: step 2/5. The sequence is that of Phosphoglycerate kinase from Xanthobacter autotrophicus (strain ATCC BAA-1158 / Py2).